Consider the following 431-residue polypeptide: Septin-11 (431 aa).

Residue Ala2 is modified to N-acetylalanine. Position 9 is a phosphoserine (Ser9). The Septin-type G domain maps to 38–304; the sequence is QGFCFNILCV…ELYRRCKLEE (267 aa). The interval 48–55 is G1 motif; sequence GETGIGKS. GTP-binding positions include 48–55, Gly103, 184–192, Gly238, and Arg253; these read GETGIGKS and KADTIAKNE. The segment at 100–103 is G3 motif; the sequence is DTVG. The tract at residues 183–186 is G4 motif; the sequence is AKAD. A coiled-coil region spans residues 320–413; sequence QETYEAKRNE…LLQSQAQQSG (94 aa). The interval 400-431 is disordered; the sequence is AAAQLLQSQAQQSGAQQTKKDKDKKNPWLCTE. Over residues 401–416 the composition is skewed to low complexity; it reads AAQLLQSQAQQSGAQQ.

Belongs to the TRAFAC class TrmE-Era-EngA-EngB-Septin-like GTPase superfamily. Septin GTPase family. Septins polymerize into heterooligomeric protein complexes that form filaments, and can associate with cellular membranes, actin filaments and microtubules. Forms homooligomers. GTPase activity is required for filament formation. Interacts with SEPTIN7, SEPTIN9 and SEPTIN12. In terms of tissue distribution, expressed in the cerebral cortex (at protein level).

It localises to the cytoplasm. The protein resides in the cytoskeleton. It is found in the synapse. Its subcellular location is the cell projection. The protein localises to the dendritic spine. It localises to the axon. Filament-forming cytoskeletal GTPase. May play a role in cytokinesis (Potential). May play a role in the cytoarchitecture of neurons, including dendritic arborization and dendritic spines, and in GABAergic synaptic connectivity. The polypeptide is Septin-11 (Mus musculus (Mouse)).